A 223-amino-acid chain; its full sequence is Phosphoenolpyruvate guanylyltransferase (223 aa).

3 residues coordinate phosphoenolpyruvate: Thr-140, Gly-156, and Ser-159.

It belongs to the CofC family.

It carries out the reaction phosphoenolpyruvate + GTP + H(+) = enolpyruvoyl-2-diphospho-5'-guanosine + diphosphate. It participates in cofactor biosynthesis; coenzyme F420 biosynthesis. In terms of biological role, guanylyltransferase that catalyzes the activation of phosphoenolpyruvate (PEP) as enolpyruvoyl-2-diphospho-5'-guanosine, via the condensation of PEP with GTP. It is involved in the biosynthesis of coenzyme F420, a hydride carrier cofactor. This Conexibacter woesei (strain DSM 14684 / CCUG 47730 / CIP 108061 / JCM 11494 / NBRC 100937 / ID131577) protein is Phosphoenolpyruvate guanylyltransferase.